The primary structure comprises 250 residues: tRNA (guanine-N(1)-)-methyltransferase (250 aa).

S-adenosyl-L-methionine-binding positions include Gly113 and 134–139; that span reads IGDYVL.

It belongs to the RNA methyltransferase TrmD family. In terms of assembly, homodimer.

It localises to the cytoplasm. The catalysed reaction is guanosine(37) in tRNA + S-adenosyl-L-methionine = N(1)-methylguanosine(37) in tRNA + S-adenosyl-L-homocysteine + H(+). Functionally, specifically methylates guanosine-37 in various tRNAs. The sequence is that of tRNA (guanine-N(1)-)-methyltransferase from Buchnera aphidicola subsp. Baizongia pistaciae (strain Bp).